Consider the following 233-residue polypeptide: tRNA (guanine-N(1)-)-methyltransferase (233 aa).

Residues glycine 113 and 133-138 (VGDYVL) each bind S-adenosyl-L-methionine.

It belongs to the RNA methyltransferase TrmD family. As to quaternary structure, homodimer.

It localises to the cytoplasm. The enzyme catalyses guanosine(37) in tRNA + S-adenosyl-L-methionine = N(1)-methylguanosine(37) in tRNA + S-adenosyl-L-homocysteine + H(+). Specifically methylates guanosine-37 in various tRNAs. The protein is tRNA (guanine-N(1)-)-methyltransferase of Rhizobium etli (strain ATCC 51251 / DSM 11541 / JCM 21823 / NBRC 15573 / CFN 42).